A 498-amino-acid polypeptide reads, in one-letter code: MMMSRKNVTYRQREKLIAEAQRQEFLREDRIKHLNYEQQMAESLKSEERVEKKRFLQRLQNEEHEKRMDEAIQLGEESRRLKERQLEQEERMALEMARIKHEKLKDEKIRQQIRENSTELRELEQKLKAAYLNRERAAQIAEKEVLKYEQMKEDLETVRKMQKDQERAEDEEIVRETKRYQEKLNYQIELERQLEEKEKTRQEAYHEFLKEKILIDEIVRKIYEEDQMETQLKLEKMNATRRYIEEFKEQQQTWRNMEQTRMEEENRKILAFANMQQRREEDRMAEVREREQQKKALQEKLAEQIQKEQQQREELEQMREELYLEEQAEEARQKAISEMEKKIRQRLEMQQTFEEQMAFKQIVQQAAKEEEEAFVQAMLAKFAEDDRIEQMNAQKRRMKQLEHKRAVEKLLEERRQQFIADKERELQERQEEERRESFRRAIIEEERQKILKQHATQLLGYLPKGIFKGEDDLNLFDEGFRQDFQKRRADISSNDGWD.

3 coiled-coil regions span residues 45 to 211, 270 to 348, and 385 to 450; these read KSEE…FLKE, LAFA…QRLE, and DDRI…RQKI.

The protein belongs to the MNS1 family.

It is found in the nucleus. The protein localises to the cytoplasm. The protein resides in the cytoskeleton. It localises to the cilium axoneme. Its subcellular location is the flagellum axoneme. Microtubule inner protein (MIP) part of the dynein-decorated doublet microtubules (DMTs) in cilia axoneme, which is required for motile cilia beating. May play a role in the control of meiotic division and germ cell differentiation through regulation of pairing and recombination during meiosis. Required for sperm flagella assembly. May play a role in the assembly and function of the outer dynein arm-docking complex (ODA-DC). ODA-DC mediates outer dynein arms (ODA) binding onto the axonemal doublet microtubules. This Xenopus tropicalis (Western clawed frog) protein is Meiosis-specific nuclear structural protein 1 (mns1).